The sequence spans 699 residues: Elongation factor G (699 aa).

The 279-residue stretch at glutamate 8–isoleucine 286 folds into the tr-type G domain. GTP-binding positions include alanine 17 to threonine 24, aspartate 84 to histidine 88, and asparagine 138 to aspartate 141.

Belongs to the TRAFAC class translation factor GTPase superfamily. Classic translation factor GTPase family. EF-G/EF-2 subfamily.

It localises to the cytoplasm. In terms of biological role, catalyzes the GTP-dependent ribosomal translocation step during translation elongation. During this step, the ribosome changes from the pre-translocational (PRE) to the post-translocational (POST) state as the newly formed A-site-bound peptidyl-tRNA and P-site-bound deacylated tRNA move to the P and E sites, respectively. Catalyzes the coordinated movement of the two tRNA molecules, the mRNA and conformational changes in the ribosome. The protein is Elongation factor G (fusA) of Aquifex pyrophilus.